A 426-amino-acid polypeptide reads, in one-letter code: Enolase (426 aa).

Residue Q163 participates in (2R)-2-phosphoglycerate binding. The Proton donor role is filled by E205. D242, E285, and D312 together coordinate Mg(2+). 4 residues coordinate (2R)-2-phosphoglycerate: K337, R366, S367, and K388. The Proton acceptor role is filled by K337.

Belongs to the enolase family. Mg(2+) serves as cofactor.

Its subcellular location is the cytoplasm. It is found in the secreted. The protein localises to the cell surface. The enzyme catalyses (2R)-2-phosphoglycerate = phosphoenolpyruvate + H2O. The protein operates within carbohydrate degradation; glycolysis; pyruvate from D-glyceraldehyde 3-phosphate: step 4/5. Catalyzes the reversible conversion of 2-phosphoglycerate (2-PG) into phosphoenolpyruvate (PEP). It is essential for the degradation of carbohydrates via glycolysis. The polypeptide is Enolase (Desulfosudis oleivorans (strain DSM 6200 / JCM 39069 / Hxd3) (Desulfococcus oleovorans)).